The following is a 427-amino-acid chain: Gamma-glutamyl phosphate reductase (427 aa).

Belongs to the gamma-glutamyl phosphate reductase family.

Its subcellular location is the cytoplasm. It carries out the reaction L-glutamate 5-semialdehyde + phosphate + NADP(+) = L-glutamyl 5-phosphate + NADPH + H(+). It participates in amino-acid biosynthesis; L-proline biosynthesis; L-glutamate 5-semialdehyde from L-glutamate: step 2/2. Its function is as follows. Catalyzes the NADPH-dependent reduction of L-glutamate 5-phosphate into L-glutamate 5-semialdehyde and phosphate. The product spontaneously undergoes cyclization to form 1-pyrroline-5-carboxylate. The chain is Gamma-glutamyl phosphate reductase from Rhizobium etli (strain ATCC 51251 / DSM 11541 / JCM 21823 / NBRC 15573 / CFN 42).